We begin with the raw amino-acid sequence, 838 residues long: Calmodulin-binding transcription activator 6 (838 aa).

The CG-1 DNA-binding region spans Val25 to Thr134. The stretch at Gln525 to Leu554 is one ANK repeat. IQ domains lie at Ser671–Arg700, Met713–Val742, and Leu788–Glu817. The calmodulin-binding stretch occupies residues Trp738–Leu760. Residues Lys802–His822 adopt a coiled-coil conformation.

This sequence belongs to the CAMTA family. As to expression, expressed in roots, stems, leaves, sepals, petals, stamen filaments, top of carpels, anthers and siliques, but not in stigmas.

The protein resides in the nucleus. Its function is as follows. Transcription activator that binds calmodulin in a calcium-dependent manner in vitro. Binds to the DNA consensus sequence 5'-[ACG]CGCG[GTC]-3'. Regulates transcriptional activity in response to calcium signals. This is Calmodulin-binding transcription activator 6 from Arabidopsis thaliana (Mouse-ear cress).